We begin with the raw amino-acid sequence, 288 residues long: Diaminopimelate epimerase (288 aa).

Residues Asn-13, Gln-51, and Asn-71 each coordinate substrate. The active-site Proton donor is the Cys-80. Substrate-binding positions include 81-82 (GN), Asn-166, Asn-200, and 218-219 (ER). Cys-227 serves as the catalytic Proton acceptor. Substrate is bound at residue 228–229 (GT).

The protein belongs to the diaminopimelate epimerase family. As to quaternary structure, homodimer.

Its subcellular location is the cytoplasm. The enzyme catalyses (2S,6S)-2,6-diaminopimelate = meso-2,6-diaminopimelate. It functions in the pathway amino-acid biosynthesis; L-lysine biosynthesis via DAP pathway; DL-2,6-diaminopimelate from LL-2,6-diaminopimelate: step 1/1. In terms of biological role, catalyzes the stereoinversion of LL-2,6-diaminopimelate (L,L-DAP) to meso-diaminopimelate (meso-DAP), a precursor of L-lysine and an essential component of the bacterial peptidoglycan. The sequence is that of Diaminopimelate epimerase from Caulobacter vibrioides (strain ATCC 19089 / CIP 103742 / CB 15) (Caulobacter crescentus).